A 251-amino-acid chain; its full sequence is Ditrans,polycis-undecaprenyl-diphosphate synthase ((2E,6E)-farnesyl-diphosphate specific) (251 aa).

D19 is an active-site residue. D19 is a binding site for Mg(2+). Substrate-binding positions include 20 to 23, W24, H36, and 64 to 66; these read GNNR and SSE. N67 serves as the catalytic Proton acceptor. Substrate-binding positions include W68, R70, R187, and 193–195; that span reads RIS. E206 is a binding site for Mg(2+).

This sequence belongs to the UPP synthase family. As to quaternary structure, homodimer. Mg(2+) serves as cofactor.

It carries out the reaction 8 isopentenyl diphosphate + (2E,6E)-farnesyl diphosphate = di-trans,octa-cis-undecaprenyl diphosphate + 8 diphosphate. In terms of biological role, catalyzes the sequential condensation of isopentenyl diphosphate (IPP) with (2E,6E)-farnesyl diphosphate (E,E-FPP) to yield (2Z,6Z,10Z,14Z,18Z,22Z,26Z,30Z,34E,38E)-undecaprenyl diphosphate (di-trans,octa-cis-UPP). UPP is the precursor of glycosyl carrier lipid in the biosynthesis of bacterial cell wall polysaccharide components such as peptidoglycan and lipopolysaccharide. This is Ditrans,polycis-undecaprenyl-diphosphate synthase ((2E,6E)-farnesyl-diphosphate specific) from Pseudomonas aeruginosa (strain ATCC 15692 / DSM 22644 / CIP 104116 / JCM 14847 / LMG 12228 / 1C / PRS 101 / PAO1).